A 222-amino-acid chain; its full sequence is Large ribosomal subunit protein mL64 (222 aa).

Disordered stretches follow at residues Met-1–Gln-51, Arg-136–Pro-170, and Leu-182–Ser-222. Residues Ala-141–Pro-170 are compositionally biased toward basic and acidic residues. Residues Glu-144–Asp-213 adopt a coiled-coil conformation. The short motif at Lys-184 to Glu-200 is the Nuclear localization signal element. The span at Ala-203–Gln-212 shows a compositional bias: low complexity.

This sequence belongs to the mitochondrion-specific ribosomal protein mL64 family. In terms of assembly, component of the mitochondrial ribosome large subunit (39S) which comprises a 16S rRNA and about 50 distinct proteins. Interacts with GADD45A, GADD45B and GADD45G. Interacts with NR4A1 via the NR4A1 AB domain. Interacts with ATAD3A and ATAD3B.

Its subcellular location is the mitochondrion. The protein localises to the nucleus. In terms of biological role, acts as a negative regulator of G1 to S cell cycle phase progression by inhibiting cyclin-dependent kinases. Inhibitory effects are additive with GADD45 proteins but also occur in the absence of GADD45 proteins. Acts as a repressor of the orphan nuclear receptor NR4A1 by inhibiting AB domain-mediated transcriptional activity. May be involved in the hormone-mediated regulation of NR4A1 transcriptional activity. May play a role in mitochondrial protein synthesis. The sequence is that of Large ribosomal subunit protein mL64 (GADD45GIP1) from Bos taurus (Bovine).